The following is a 408-amino-acid chain: Dual-specificity RNA methyltransferase RlmN (408 aa).

Glu-126 functions as the Proton acceptor in the catalytic mechanism. In terms of domain architecture, Radical SAM core spans 132–373; it reads EEGRGTLCLS…NQAGYASPIR (242 aa). Cysteines 139 and 384 form a disulfide. [4Fe-4S] cluster-binding residues include Cys-146, Cys-150, and Cys-153. S-adenosyl-L-methionine contacts are provided by residues 210–211, Ser-242, 264–266, and Asn-341; these read GE and SLH. Cys-384 (S-methylcysteine intermediate) is an active-site residue.

Belongs to the radical SAM superfamily. RlmN family. Requires [4Fe-4S] cluster as cofactor.

The protein localises to the cytoplasm. It catalyses the reaction adenosine(2503) in 23S rRNA + 2 reduced [2Fe-2S]-[ferredoxin] + 2 S-adenosyl-L-methionine = 2-methyladenosine(2503) in 23S rRNA + 5'-deoxyadenosine + L-methionine + 2 oxidized [2Fe-2S]-[ferredoxin] + S-adenosyl-L-homocysteine. The catalysed reaction is adenosine(37) in tRNA + 2 reduced [2Fe-2S]-[ferredoxin] + 2 S-adenosyl-L-methionine = 2-methyladenosine(37) in tRNA + 5'-deoxyadenosine + L-methionine + 2 oxidized [2Fe-2S]-[ferredoxin] + S-adenosyl-L-homocysteine. Functionally, specifically methylates position 2 of adenine 2503 in 23S rRNA and position 2 of adenine 37 in tRNAs. m2A2503 modification seems to play a crucial role in the proofreading step occurring at the peptidyl transferase center and thus would serve to optimize ribosomal fidelity. The sequence is that of Dual-specificity RNA methyltransferase RlmN from Bartonella tribocorum (strain CIP 105476 / IBS 506).